The primary structure comprises 197 residues: NADH-quinone oxidoreductase subunit C (197 aa).

This sequence belongs to the complex I 30 kDa subunit family. In terms of assembly, NDH-1 is composed of 14 different subunits. Subunits NuoB, C, D, E, F, and G constitute the peripheral sector of the complex.

Its subcellular location is the cell inner membrane. It catalyses the reaction a quinone + NADH + 5 H(+)(in) = a quinol + NAD(+) + 4 H(+)(out). Functionally, NDH-1 shuttles electrons from NADH, via FMN and iron-sulfur (Fe-S) centers, to quinones in the respiratory chain. The immediate electron acceptor for the enzyme in this species is believed to be ubiquinone. Couples the redox reaction to proton translocation (for every two electrons transferred, four hydrogen ions are translocated across the cytoplasmic membrane), and thus conserves the redox energy in a proton gradient. The sequence is that of NADH-quinone oxidoreductase subunit C from Neisseria gonorrhoeae (strain ATCC 700825 / FA 1090).